Reading from the N-terminus, the 348-residue chain is uncharacterized protein (348 aa).

May be involved in apoptosis regulation. This is an uncharacterized protein from Mus musculus (Mouse).